Reading from the N-terminus, the 378-residue chain is MIQYVYLKHMRKLWSLGKVRSTVLRFSTTNRNASHLIKNELEQISPGIRQMLNSNSEFLEECSKYYTIAQGKQMRPSLVLLMSKATSLCHGIDRSVVGDKYIDDDDLRSFSTGQILPSQLRLAQITEMIHIASLLHDDVIDHANVRRGSPSSNVAFGNRRSILAGNFILARASTAMARLRNPQVTELLATVIADLVRGEFLQLKNTMDPSSLEIKQSNFDYYIEKSFLKTASLISKSCKASTILGQCSPTVATAAGEYGRCIGTAFQLMDDVLDYTSKDDTLGKAAGADLKLGLATAPVLFAWKKYPELGAMIVNRFNHPSDIQRARSLVECTDAIEQTITWAKEYIKKAKDSLLCLPDSPARKALFALADKVITRKK.

The isopentenyl diphosphate site is built by Lys72, Arg75, and His130. Asp137 and Asp141 together coordinate Mg(2+). Arg147 contacts isopentenyl diphosphate.

This sequence belongs to the FPP/GGPP synthase family. In terms of assembly, heterotetramer of 2 dps1 and 2 dlp1 subunits. Mg(2+) is required as a cofactor.

It localises to the mitochondrion. The enzyme catalyses 7 isopentenyl diphosphate + (2E,6E)-farnesyl diphosphate = all-trans-decaprenyl diphosphate + 7 diphosphate. It functions in the pathway cofactor biosynthesis; ubiquinone biosynthesis. Supplies decaprenyl diphosphate, the precursor for the side chain of the isoprenoid quinones ubiquinone-10. The sequence is that of Decaprenyl-diphosphate synthase subunit 1 (dps1) from Schizosaccharomyces pombe (strain 972 / ATCC 24843) (Fission yeast).